The following is a 319-amino-acid chain: Cytochrome c biogenesis protein CcsA (319 aa).

8 consecutive transmembrane segments (helical) span residues 14-34, 36-56, 69-89, 97-117, 142-162, 227-247, 254-274, and 288-308; these read AFGG…FPGI, GLNR…TLTL, SNLY…HLFI, LIGA…SLAL, IMML…LFLI, TIGL…VWAN, WSWD…AAYL, and AILA…VNFL.

Belongs to the CcmF/CycK/Ccl1/NrfE/CcsA family. In terms of assembly, may interact with Ccs1.

Its subcellular location is the plastid. The protein resides in the chloroplast thylakoid membrane. In terms of biological role, required during biogenesis of c-type cytochromes (cytochrome c6 and cytochrome f) at the step of heme attachment. The polypeptide is Cytochrome c biogenesis protein CcsA (Pyropia yezoensis (Susabi-nori)).